The sequence spans 747 residues: Threonine synthase-like 1 (747 aa).

N6-(pyridoxal phosphate)lysine is present on Lys351.

This sequence belongs to the threonine synthase family. The cofactor is pyridoxal 5'-phosphate.

In Mus musculus (Mouse), this protein is Threonine synthase-like 1 (Thnsl1).